The following is a 428-amino-acid chain: Ectonucleoside triphosphate diphosphohydrolase 5 (428 aa).

A signal peptide spans 1–24 (MTSSRLPVLLALVFSSLSPVLSHS). The active-site Proton acceptor is the glutamate 172. An N-linked (GlcNAc...) asparagine glycan is attached at asparagine 232. Intrachain disulfides connect cysteine 272/cysteine 303 and cysteine 363/cysteine 377.

Belongs to the GDA1/CD39 NTPase family. As to quaternary structure, monomer; active form. Homodimer; disulfide-linked. Homodimers are enzymatically inactive. It depends on Ca(2+) as a cofactor. Mg(2+) serves as cofactor.

It is found in the endoplasmic reticulum. The protein localises to the secreted. The catalysed reaction is a ribonucleoside 5'-diphosphate + H2O = a ribonucleoside 5'-phosphate + phosphate + H(+). The enzyme catalyses GDP + H2O = GMP + phosphate + H(+). It catalyses the reaction UDP + H2O = UMP + phosphate + H(+). It carries out the reaction IDP + H2O = IMP + phosphate + H(+). The catalysed reaction is CDP + H2O = CMP + phosphate + H(+). The enzyme catalyses ADP + H2O = AMP + phosphate + H(+). It participates in protein modification; protein glycosylation. Hydrolyzes nucleoside diphosphates with a preference for GDP, IDP and UDP compared to ADP and CDP. In the lumen of the endoplasmic reticulum, hydrolyzes UDP that acts as an end-product feedback inhibitor of the UDP-Glc:glycoprotein glucosyltransferases. UMP can be transported back by an UDP-sugar antiporter to the cytosol where it is consumed to regenerate UDP-glucose. Therefore, it positively regulates protein reglucosylation by clearing UDP from the ER lumen and by promoting the regeneration of UDP-glucose. Protein reglucosylation is essential to proper glycoprotein folding and quality control in the ER. The chain is Ectonucleoside triphosphate diphosphohydrolase 5 (ENTPD5) from Gallus gallus (Chicken).